A 441-amino-acid polypeptide reads, in one-letter code: Peroxisome proliferator-activated receptor delta (441 aa).

Acidic residues predominate over residues 1–22 (MEQPQEEAPEVREEEEKEEVAE). Positions 1 to 54 (MEQPQEEAPEVREEEEKEEVAEAEGAPELNGGPQHALPSSSYTDLSRSSSPPSL) are disordered. The span at 37 to 54 (LPSSSYTDLSRSSSPPSL) shows a compositional bias: low complexity. The nuclear receptor DNA-binding region spans 71–145 (NMECRVCGDK…LGMSHNAIRF (75 aa)). NR C4-type zinc fingers lie at residues 74-94 (CRVC…CEGC) and 111-133 (CERS…FQKC). One can recognise an NR LBD domain in the interval 211 to 439 (FVIHDIETLW…HPLLQEIYKD (229 aa)).

The protein belongs to the nuclear hormone receptor family. NR1 subfamily. In terms of assembly, heterodimer with the retinoid X receptor. Interacts (via domain NR LBD) with CRY1 and CRY2 in a ligand-dependent manner. Post-translationally, 'Lys-48'-linked polyubiquitinated; leading to proteasomal degradation. Deubiquitinated and stabilized by OTUD3. In terms of tissue distribution, ubiquitous with maximal levels in placenta and skeletal muscle.

Its subcellular location is the nucleus. Its function is as follows. Ligand-activated transcription factor key mediator of energy metabolism in adipose tissues. Receptor that binds peroxisome proliferators such as hypolipidemic drugs and fatty acids. Has a preference for poly-unsaturated fatty acids, such as gamma-linoleic acid and eicosapentanoic acid. Once activated by a ligand, the receptor binds to promoter elements of target genes. Regulates the peroxisomal beta-oxidation pathway of fatty acids. Functions as transcription activator for the acyl-CoA oxidase gene. Decreases expression of NPC1L1 once activated by a ligand. The sequence is that of Peroxisome proliferator-activated receptor delta from Homo sapiens (Human).